The chain runs to 271 residues: tRNA (guanine-N(7)-)-methyltransferase (271 aa).

Residues 1 to 52 (MSDSHHTPEAASASLRHVRAKGEPRFPDGPKADPAGSHFERRIRSFQPRRSR) are disordered. The segment covering 20–31 (AKGEPRFPDGPK) has biased composition (basic and acidic residues). S-adenosyl-L-methionine contacts are provided by Glu-93, Asp-118, Asp-145, and Asp-168. Residue Asp-168 is part of the active site. Substrate contacts are provided by residues Lys-172, Asp-204, and 241 to 244 (TRFE).

Belongs to the class I-like SAM-binding methyltransferase superfamily. TrmB family.

It carries out the reaction guanosine(46) in tRNA + S-adenosyl-L-methionine = N(7)-methylguanosine(46) in tRNA + S-adenosyl-L-homocysteine. The protein operates within tRNA modification; N(7)-methylguanine-tRNA biosynthesis. Catalyzes the formation of N(7)-methylguanine at position 46 (m7G46) in tRNA. This is tRNA (guanine-N(7)-)-methyltransferase from Streptomyces coelicolor (strain ATCC BAA-471 / A3(2) / M145).